The primary structure comprises 220 residues: Deoxyribose-phosphate aldolase (220 aa).

Residue Asp89 is the Proton donor/acceptor of the active site. Lys151 acts as the Schiff-base intermediate with acetaldehyde in catalysis. The active-site Proton donor/acceptor is Lys180.

It belongs to the DeoC/FbaB aldolase family. DeoC type 1 subfamily.

The protein resides in the cytoplasm. The enzyme catalyses 2-deoxy-D-ribose 5-phosphate = D-glyceraldehyde 3-phosphate + acetaldehyde. Its pathway is carbohydrate degradation; 2-deoxy-D-ribose 1-phosphate degradation; D-glyceraldehyde 3-phosphate and acetaldehyde from 2-deoxy-alpha-D-ribose 1-phosphate: step 2/2. Functionally, catalyzes a reversible aldol reaction between acetaldehyde and D-glyceraldehyde 3-phosphate to generate 2-deoxy-D-ribose 5-phosphate. This Streptococcus sanguinis (strain SK36) protein is Deoxyribose-phosphate aldolase.